The sequence spans 90 residues: Large ribosomal subunit protein uL16c (90 aa).

The protein belongs to the universal ribosomal protein uL16 family. Part of the 50S ribosomal subunit.

It localises to the plastid. It is found in the chloroplast. This Oenothera ammophila (Evening primerose) protein is Large ribosomal subunit protein uL16c (rpl16).